The sequence spans 203 residues: Thymidylate kinase (203 aa).

An ATP-binding site is contributed by 14–21; it reads GGEGIGKS.

It belongs to the thymidylate kinase family.

The catalysed reaction is dTMP + ATP = dTDP + ADP. In terms of biological role, phosphorylation of dTMP to form dTDP in both de novo and salvage pathways of dTTP synthesis. This is Thymidylate kinase from Rickettsia conorii (strain ATCC VR-613 / Malish 7).